The primary structure comprises 66 residues: ATP synthase protein 8 (66 aa).

The helical transmembrane segment at 8 to 24 threads the bilayer; the sequence is PWPMVIMSMILTLFYIT. At K54 the chain carries N6-acetyllysine; alternate. K54 carries the N6-succinyllysine; alternate modification. Residue K57 is modified to N6-acetyllysine.

Belongs to the ATPase protein 8 family. F-type ATPases have 2 components, CF(1) - the catalytic core - and CF(0) - the membrane proton channel. Component of an ATP synthase complex composed of ATP5PB, ATP5MC1, ATP5F1E, ATP5PD, ATP5ME, ATP5PF, ATP5MF, MT-ATP6, MT-ATP8, ATP5F1A, ATP5F1B, ATP5F1D, ATP5F1C, ATP5PO, ATP5MG, ATP5MK and ATP5MJ. Interacts with PRICKLE3.

The protein localises to the mitochondrion membrane. Its function is as follows. Mitochondrial membrane ATP synthase (F(1)F(0) ATP synthase or Complex V) produces ATP from ADP in the presence of a proton gradient across the membrane which is generated by electron transport complexes of the respiratory chain. F-type ATPases consist of two structural domains, F(1) - containing the extramembraneous catalytic core and F(0) - containing the membrane proton channel, linked together by a central stalk and a peripheral stalk. During catalysis, ATP synthesis in the catalytic domain of F(1) is coupled via a rotary mechanism of the central stalk subunits to proton translocation. Part of the complex F(0) domain. Minor subunit located with subunit a in the membrane. The chain is ATP synthase protein 8 (MT-ATP8) from Alouatta guariba (Brown howler monkey).